Consider the following 117-residue polypeptide: Immunity protein BC_0921 (117 aa).

As to quaternary structure, probably interacts with cognate toxin BC_0920 but not with other non-cognate toxins. The interaction inhibits the toxic activity of BC_0920.

It is found in the cytoplasm. Immunity component of an LXG toxin-immunity module. Neutralizes the RNase activity of cognate toxin BC_0920. Probably does not have immunity protein activity on other toxins with the LXG domain. This Bacillus cereus (strain ATCC 14579 / DSM 31 / CCUG 7414 / JCM 2152 / NBRC 15305 / NCIMB 9373 / NCTC 2599 / NRRL B-3711) protein is Immunity protein BC_0921.